The following is a 1179-amino-acid chain: ATP-dependent helicase/deoxyribonuclease subunit B (1179 aa).

Belongs to the helicase family. AddB/RexB type 2 subfamily. As to quaternary structure, heterodimer of AddA and RexB. The cofactor is Mg(2+).

Functionally, the heterodimer acts as both an ATP-dependent DNA helicase and an ATP-dependent, dual-direction single-stranded exonuclease. Recognizes the chi site generating a DNA molecule suitable for the initiation of homologous recombination. This subunit has 5' -&gt; 3' nuclease activity but not helicase activity. This chain is ATP-dependent helicase/deoxyribonuclease subunit B, found in Lacticaseibacillus casei (strain BL23) (Lactobacillus casei).